The following is a 371-amino-acid chain: Histidinol-phosphate aminotransferase (371 aa).

Lysine 222 carries the N6-(pyridoxal phosphate)lysine modification.

It belongs to the class-II pyridoxal-phosphate-dependent aminotransferase family. Histidinol-phosphate aminotransferase subfamily. Homodimer. Pyridoxal 5'-phosphate serves as cofactor.

It catalyses the reaction L-histidinol phosphate + 2-oxoglutarate = 3-(imidazol-4-yl)-2-oxopropyl phosphate + L-glutamate. It functions in the pathway amino-acid biosynthesis; L-histidine biosynthesis; L-histidine from 5-phospho-alpha-D-ribose 1-diphosphate: step 7/9. The protein is Histidinol-phosphate aminotransferase of Anoxybacillus flavithermus (strain DSM 21510 / WK1).